Reading from the N-terminus, the 115-residue chain is Phosphoribosyl-AMP cyclohydrolase (115 aa).

D80 serves as a coordination point for Mg(2+). C81 serves as a coordination point for Zn(2+). Mg(2+) contacts are provided by D82 and D84. The Zn(2+) site is built by C97 and C104.

The protein belongs to the PRA-CH family. Homodimer. It depends on Mg(2+) as a cofactor. Zn(2+) is required as a cofactor.

It is found in the cytoplasm. The catalysed reaction is 1-(5-phospho-beta-D-ribosyl)-5'-AMP + H2O = 1-(5-phospho-beta-D-ribosyl)-5-[(5-phospho-beta-D-ribosylamino)methylideneamino]imidazole-4-carboxamide. It participates in amino-acid biosynthesis; L-histidine biosynthesis; L-histidine from 5-phospho-alpha-D-ribose 1-diphosphate: step 3/9. Catalyzes the hydrolysis of the adenine ring of phosphoribosyl-AMP. The sequence is that of Phosphoribosyl-AMP cyclohydrolase from Mycolicibacterium smegmatis (strain ATCC 700084 / mc(2)155) (Mycobacterium smegmatis).